Here is a 377-residue protein sequence, read N- to C-terminus: Hydrogenase maturation factor HypD (377 aa).

3 residues coordinate Fe cation: Cys41, Cys69, and Cys72.

The protein belongs to the HypD family. [4Fe-4S] cluster is required as a cofactor.

It functions in the pathway protein modification; [NiFe] hydrogenase maturation. Involved in the maturation of [NiFe] hydrogenases. Involved in the biosynthesis of the Fe(CN)(2)CO cofactor. The chain is Hydrogenase maturation factor HypD from Rhodobacter capsulatus (Rhodopseudomonas capsulata).